An 87-amino-acid chain; its full sequence is uncharacterized protein (87 aa).

Residues 25–47 (FFWEVCNMILFIIIALCGYLLFS) traverse the membrane as a helical segment.

Its subcellular location is the membrane. This is an uncharacterized protein from Bacillus subtilis (strain 168).